The primary structure comprises 963 residues: Isoleucine--tRNA ligase (963 aa).

A 'HIGH' region motif is present at residues 66-76 (PYANGDIHIGH). Glutamate 596 is a binding site for L-isoleucyl-5'-AMP. A 'KMSKS' region motif is present at residues 637 to 641 (KMSKS). An ATP-binding site is contributed by lysine 640. Zn(2+)-binding residues include cysteine 926, cysteine 929, cysteine 946, and cysteine 949.

Belongs to the class-I aminoacyl-tRNA synthetase family. IleS type 1 subfamily. Monomer. Zn(2+) serves as cofactor.

The protein resides in the cytoplasm. The catalysed reaction is tRNA(Ile) + L-isoleucine + ATP = L-isoleucyl-tRNA(Ile) + AMP + diphosphate. In terms of biological role, catalyzes the attachment of isoleucine to tRNA(Ile). As IleRS can inadvertently accommodate and process structurally similar amino acids such as valine, to avoid such errors it has two additional distinct tRNA(Ile)-dependent editing activities. One activity is designated as 'pretransfer' editing and involves the hydrolysis of activated Val-AMP. The other activity is designated 'posttransfer' editing and involves deacylation of mischarged Val-tRNA(Ile). This Cupriavidus pinatubonensis (strain JMP 134 / LMG 1197) (Cupriavidus necator (strain JMP 134)) protein is Isoleucine--tRNA ligase.